The sequence spans 275 residues: Putative phosphoenolpyruvate synthase regulatory protein (275 aa).

157–164 contributes to the ADP binding site; that stretch reads GVSRCGKT.

Belongs to the pyruvate, phosphate/water dikinase regulatory protein family. PSRP subfamily.

It carries out the reaction [pyruvate, water dikinase] + ADP = [pyruvate, water dikinase]-phosphate + AMP + H(+). It catalyses the reaction [pyruvate, water dikinase]-phosphate + phosphate + H(+) = [pyruvate, water dikinase] + diphosphate. Functionally, bifunctional serine/threonine kinase and phosphorylase involved in the regulation of the phosphoenolpyruvate synthase (PEPS) by catalyzing its phosphorylation/dephosphorylation. The sequence is that of Putative phosphoenolpyruvate synthase regulatory protein from Bordetella bronchiseptica (strain ATCC BAA-588 / NCTC 13252 / RB50) (Alcaligenes bronchisepticus).